Here is a 474-residue protein sequence, read N- to C-terminus: Ankyrin repeat, SAM and basic leucine zipper domain-containing protein 1 (474 aa).

A disordered region spans residues 1 to 31; that stretch reads MAGRLRGPAVPGGGESSDSDEDGWDIGYTER. 3 positions are modified to phosphoserine: S16, S17, and S19. ANK repeat units follow at residues 43-72, 76-105, 108-142, 146-175, 179-208, and 212-241; these read EKDEVLKRALTTGDGSLLEELLNSGMQVDS, FGWTPLMYAASIANVDLVRILLDRGANASF, DQHTVLMAACSARVPEERILKTAELLLSRNASPNA, KRMSPLMYAAREGHSQLVALLVGHGAEINA, NGYTALAWAARHGHKTTVLKLLELGADKTL, and DGKTPAEIAKRNKHPELFSMLSLTLNPLHG. In terms of domain architecture, SAM spans 270–333; sequence SYSAFGDLEI…KIMDAVEELQ (64 aa).

Interacts with DDX4, PIWIL1, RANBP9 and TDRD1.

The protein resides in the cytoplasm. Its function is as follows. Plays a central role during spermatogenesis by repressing transposable elements and preventing their mobilization, which is essential for the germline integrity. Acts via the piRNA metabolic process, which mediates the repression of transposable elements during meiosis by forming complexes composed of piRNAs and Piwi proteins and governs the methylation and subsequent repression of transposons. Its association with pi-bodies suggests a participation in the primary piRNAs metabolic process. Required prior to the pachytene stage to facilitate the production of multiple types of piRNAs, including those associated with repeats involved in the regulation of retrotransposons. May act by mediating protein-protein interactions during germ cell maturation. The chain is Ankyrin repeat, SAM and basic leucine zipper domain-containing protein 1 (ASZ1) from Ornithorhynchus anatinus (Duckbill platypus).